The primary structure comprises 582 residues: NAB transcription cofactor mab-10 (582 aa).

The segment covering 1-70 (MSSSSSSSLP…SSSSQRQSTS (70 aa)) has biased composition (low complexity). 4 disordered regions span residues 1–84 (MSSS…MPTP), 257–287 (SDQQ…PAGI), 333–365 (PPSS…SPFL), and 516–582 (SRKR…LPES). The NCD1 stretch occupies residues 83–161 (TPTTLSEWQL…EYSQDQTAFN (79 aa)). Low complexity-rich tracts occupy residues 257-276 (SDQQ…STSS) and 333-345 (PPSS…PSTS). Residues 396 to 519 (LSTAQISRLA…GYNYAKSRKR (124 aa)) form an NCD2 region. Over residues 573 to 582 (EKMKGELPES) the composition is skewed to basic and acidic residues.

It belongs to the NAB family. As to quaternary structure, interacts with transcription factor lin-29 (via C-terminus).

It localises to the nucleus. Functionally, transcriptional cofactor. Heterochronic protein, involved in timing of a subset of differentiation events during the larval-to-adult transition. Promotes hypodermal terminal differentiation, together with transcription factor lin-29, perhaps as part of a transcriptional complex. Involved in regulating molting by repressing the expression of nuclear hormone receptors nhr-23 and nhr-25 in the adult hypoderm, probably acting in concert with lin-29. The protein is NAB transcription cofactor mab-10 of Caenorhabditis elegans.